We begin with the raw amino-acid sequence, 86 residues long: Small ribosomal subunit protein bS16 (86 aa).

The protein belongs to the bacterial ribosomal protein bS16 family.

The sequence is that of Small ribosomal subunit protein bS16 from Hamiltonella defensa subsp. Acyrthosiphon pisum (strain 5AT).